The chain runs to 1377 residues: DNA-directed RNA polymerase subunit beta (1377 aa).

Belongs to the RNA polymerase beta chain family. In terms of assembly, the RNAP catalytic core consists of 2 alpha, 1 beta, 1 beta' and 1 omega subunit. When a sigma factor is associated with the core the holoenzyme is formed, which can initiate transcription.

The enzyme catalyses RNA(n) + a ribonucleoside 5'-triphosphate = RNA(n+1) + diphosphate. In terms of biological role, DNA-dependent RNA polymerase catalyzes the transcription of DNA into RNA using the four ribonucleoside triphosphates as substrates. The sequence is that of DNA-directed RNA polymerase subunit beta from Brucella suis biovar 1 (strain 1330).